A 366-amino-acid polypeptide reads, in one-letter code: UDP-N-acetylglucosamine--N-acetylmuramyl-(pentapeptide) pyrophosphoryl-undecaprenol N-acetylglucosamine transferase (366 aa).

Residues 17–19 (TGG), N129, R169, S195, I251, 270–275 (ALTVSE), and Q296 each bind UDP-N-acetyl-alpha-D-glucosamine.

It belongs to the glycosyltransferase 28 family. MurG subfamily.

The protein localises to the cell inner membrane. The catalysed reaction is di-trans,octa-cis-undecaprenyl diphospho-N-acetyl-alpha-D-muramoyl-L-alanyl-D-glutamyl-meso-2,6-diaminopimeloyl-D-alanyl-D-alanine + UDP-N-acetyl-alpha-D-glucosamine = di-trans,octa-cis-undecaprenyl diphospho-[N-acetyl-alpha-D-glucosaminyl-(1-&gt;4)]-N-acetyl-alpha-D-muramoyl-L-alanyl-D-glutamyl-meso-2,6-diaminopimeloyl-D-alanyl-D-alanine + UDP + H(+). Its pathway is cell wall biogenesis; peptidoglycan biosynthesis. Cell wall formation. Catalyzes the transfer of a GlcNAc subunit on undecaprenyl-pyrophosphoryl-MurNAc-pentapeptide (lipid intermediate I) to form undecaprenyl-pyrophosphoryl-MurNAc-(pentapeptide)GlcNAc (lipid intermediate II). The protein is UDP-N-acetylglucosamine--N-acetylmuramyl-(pentapeptide) pyrophosphoryl-undecaprenol N-acetylglucosamine transferase of Shewanella denitrificans (strain OS217 / ATCC BAA-1090 / DSM 15013).